The chain runs to 471 residues: Cell division protein FtsP (471 aa).

The tat-type signal signal peptide spans 1–27 (MSLSRRSFLQASGVALAAGALPLKAEA). Positions 229-288 (VRLRLLNASNARRYELSMTDNRAFHVVASDLGFLPAPMTVKRLSLGPGERREVLVDMSQG) constitute a Plastocyanin-like domain.

This sequence belongs to the FtsP family. Predicted to be exported by the Tat system. The position of the signal peptide cleavage has not been experimentally proven.

Its subcellular location is the periplasm. Cell division protein that is required for growth during stress conditions. May be involved in protecting or stabilizing the divisomal assembly under conditions of stress. This Rahnella sp. (strain Y9602) protein is Cell division protein FtsP.